Reading from the N-terminus, the 257-residue chain is Imidazole glycerol phosphate synthase subunit HisF (257 aa).

Active-site residues include D12 and D131.

The protein belongs to the HisA/HisF family. As to quaternary structure, heterodimer of HisH and HisF.

The protein localises to the cytoplasm. The enzyme catalyses 5-[(5-phospho-1-deoxy-D-ribulos-1-ylimino)methylamino]-1-(5-phospho-beta-D-ribosyl)imidazole-4-carboxamide + L-glutamine = D-erythro-1-(imidazol-4-yl)glycerol 3-phosphate + 5-amino-1-(5-phospho-beta-D-ribosyl)imidazole-4-carboxamide + L-glutamate + H(+). The protein operates within amino-acid biosynthesis; L-histidine biosynthesis; L-histidine from 5-phospho-alpha-D-ribose 1-diphosphate: step 5/9. In terms of biological role, IGPS catalyzes the conversion of PRFAR and glutamine to IGP, AICAR and glutamate. The HisF subunit catalyzes the cyclization activity that produces IGP and AICAR from PRFAR using the ammonia provided by the HisH subunit. The polypeptide is Imidazole glycerol phosphate synthase subunit HisF (Cellvibrio japonicus (strain Ueda107) (Pseudomonas fluorescens subsp. cellulosa)).